Consider the following 139-residue polypeptide: Transcription antitermination protein NusB (139 aa).

The protein belongs to the NusB family.

Functionally, involved in transcription antitermination. Required for transcription of ribosomal RNA (rRNA) genes. Binds specifically to the boxA antiterminator sequence of the ribosomal RNA (rrn) operons. This is Transcription antitermination protein NusB from Lactiplantibacillus plantarum (strain ATCC BAA-793 / NCIMB 8826 / WCFS1) (Lactobacillus plantarum).